The sequence spans 620 residues: Kelch-like protein 32 (620 aa).

Residues 42–109 (CDITLIAEEQ…AYTGQILLEP (68 aa)) enclose the BTB domain. Kelch repeat units follow at residues 290 to 346 (TLYI…VMGD), 347 to 398 (FLFV…AMEE), 399 to 446 (YLYA…VADG), 447 to 494 (LLWI…AVQR), 496 to 547 (LYVL…VHNG), and 549 to 599 (IYLV…FLPA).

This chain is Kelch-like protein 32 (KLHL32), found in Homo sapiens (Human).